The chain runs to 278 residues: Ribosomal RNA small subunit methyltransferase A (278 aa).

Positions 27, 29, 54, 75, 95, and 118 each coordinate S-adenosyl-L-methionine.

The protein belongs to the class I-like SAM-binding methyltransferase superfamily. rRNA adenine N(6)-methyltransferase family. RsmA subfamily.

It is found in the cytoplasm. The catalysed reaction is adenosine(1518)/adenosine(1519) in 16S rRNA + 4 S-adenosyl-L-methionine = N(6)-dimethyladenosine(1518)/N(6)-dimethyladenosine(1519) in 16S rRNA + 4 S-adenosyl-L-homocysteine + 4 H(+). Its function is as follows. Specifically dimethylates two adjacent adenosines (A1518 and A1519) in the loop of a conserved hairpin near the 3'-end of 16S rRNA in the 30S particle. May play a critical role in biogenesis of 30S subunits. The polypeptide is Ribosomal RNA small subunit methyltransferase A (Chlamydia abortus (strain DSM 27085 / S26/3) (Chlamydophila abortus)).